The primary structure comprises 431 residues: Cleavage stimulation factor subunit 1 (431 aa).

WD repeat units lie at residues 106–145, 171–210, 215–254, 260–301, 303–343, and 395–431; these read SHKG…AKSA, DHVD…AKRA, QEAE…CFVS, QHTD…TTFE, AHDG…TLVR, and GHNN…STTD.

In terms of assembly, homodimer. The CSTF complex is composed of CSTF1 (50 kDa subunit), CSTF2 (64 kDa subunit) and CSTF3 (77 kDa subunit). Interacts (via repeats WD) directly with CSTF3. Interacts (via repeat WD6) with BARD1. Interacts with ERCC6.

It is found in the nucleus. Its function is as follows. One of the multiple factors required for polyadenylation and 3'-end cleavage of mammalian pre-mRNAs. May be responsible for the interaction of CSTF with other factors to form a stable complex on the pre-mRNA. This chain is Cleavage stimulation factor subunit 1 (Cstf1), found in Mus musculus (Mouse).